Consider the following 838-residue polypeptide: Calmodulin-binding transcription activator 6 (838 aa).

A DNA-binding region (CG-1) is located at residues 25 to 134 (VQTMLEEAKS…YRDTQEAATT (110 aa)). One copy of the ANK repeat lies at 525 to 554 (QGWTALHWAAYYGREKMVAALLSAGARPNL). IQ domains follow at residues 671–700 (SIIAAMKIQNAFRKYDTRRKIEAAYRIQCR), 713–742 (MRRQAIRIQAAFRGLQARRQYKKILWSVGV), and 788–817 (LERSVVRVQAMFRSKKAQQDYRRMKLTHEE). Residues 738-760 (WSVGVLEKAVLRWRQKRKGFRGL) are calmodulin-binding. Residues 802–822 (KKAQQDYRRMKLTHEEAQVNH) are a coiled coil.

This sequence belongs to the CAMTA family. Expressed in roots, stems, leaves, sepals, petals, stamen filaments, top of carpels, anthers and siliques, but not in stigmas.

It localises to the nucleus. Functionally, transcription activator that binds calmodulin in a calcium-dependent manner in vitro. Binds to the DNA consensus sequence 5'-[ACG]CGCG[GTC]-3'. Regulates transcriptional activity in response to calcium signals. This is Calmodulin-binding transcription activator 6 from Arabidopsis thaliana (Mouse-ear cress).